The chain runs to 263 residues: MLTAHKITVLINIFFIFSNYNNIKAHLVSYPSLTSLYGTSLKYFSVGILFTSNPIIFIIFVYSIRESFYSIFSSLVSGMLSIIISEAILFITYFWGILHFSLSPYPLYNEGIILTSSRMLILTITFILASASCMTACLQFLIEKGMSLEISSIVFIIYLLGECFASLQTTEYLHLGYCINDAISGTLFYCVTGLHFSHVIVGLLLLLIYFIRIVEMYDTNSEWSYSLYGISYIVLPHTDQITILYWHFVEIVWLFIEYFFYSE.

The next 7 membrane-spanning stretches (helical) occupy residues 7–27 (ITVLINIFFIFSNYNNIKAHL), 44–64 (FSVGILFTSNPIIFIIFVYSI), 78–98 (GMLSIIISEAILFITYFWGIL), 120–140 (LILTITFILASASCMTACLQF), 145–165 (GMSLEISSIVFIIYLLGECFA), 191–211 (VTGLHFSHVIVGLLLLLIYFI), and 241–261 (ITILYWHFVEIVWLFIEYFFY).

It belongs to the cytochrome c oxidase subunit 3 family. Component of the cytochrome c oxidase (complex IV, CIV), a multisubunit enzyme composed of a catalytic core of 3 subunits and several supernumerary subunits. The complex exists as a monomer or a dimer and forms supercomplexes (SCs) in the inner mitochondrial membrane with ubiquinol-cytochrome c oxidoreductase (cytochrome b-c1 complex, complex III, CIII).

The protein localises to the mitochondrion inner membrane. It catalyses the reaction 4 Fe(II)-[cytochrome c] + O2 + 8 H(+)(in) = 4 Fe(III)-[cytochrome c] + 2 H2O + 4 H(+)(out). Its function is as follows. Component of the cytochrome c oxidase, the last enzyme in the mitochondrial electron transport chain which drives oxidative phosphorylation. The respiratory chain contains 3 multisubunit complexes succinate dehydrogenase (complex II, CII), ubiquinol-cytochrome c oxidoreductase (cytochrome b-c1 complex, complex III, CIII) and cytochrome c oxidase (complex IV, CIV), that cooperate to transfer electrons derived from NADH and succinate to molecular oxygen, creating an electrochemical gradient over the inner membrane that drives transmembrane transport and the ATP synthase. Cytochrome c oxidase is the component of the respiratory chain that catalyzes the reduction of oxygen to water. Electrons originating from reduced cytochrome c in the intermembrane space (IMS) are transferred via the dinuclear copper A center (CU(A)) of subunit 2 and heme A of subunit 1 to the active site in subunit 1, a binuclear center (BNC) formed by heme A3 and copper B (CU(B)). The BNC reduces molecular oxygen to 2 water molecules using 4 electrons from cytochrome c in the IMS and 4 protons from the mitochondrial matrix. The sequence is that of Cytochrome c oxidase subunit 3 (COIII) from Plasmodium vivax.